The primary structure comprises 100 residues: NADH-quinone oxidoreductase subunit K (100 aa).

The next 3 helical transmembrane spans lie at 4–24, 29–49, and 60–80; these read LSHA…AIIV, LFIL…FVIV, and IMYI…LALL.

The protein belongs to the complex I subunit 4L family. NDH-1 is composed of 13 different subunits. Subunits NuoA, H, J, K, L, M, N constitute the membrane sector of the complex.

It localises to the cell inner membrane. The enzyme catalyses a quinone + NADH + 5 H(+)(in) = a quinol + NAD(+) + 4 H(+)(out). Functionally, NDH-1 shuttles electrons from NADH, via FMN and iron-sulfur (Fe-S) centers, to quinones in the respiratory chain. The immediate electron acceptor for the enzyme in this species is believed to be ubiquinone. Couples the redox reaction to proton translocation (for every two electrons transferred, four hydrogen ions are translocated across the cytoplasmic membrane), and thus conserves the redox energy in a proton gradient. This chain is NADH-quinone oxidoreductase subunit K, found in Blochmanniella pennsylvanica (strain BPEN).